Reading from the N-terminus, the 231-residue chain is Probable methylthioribulose-1-phosphate dehydratase (231 aa).

Cys-90 contributes to the substrate binding site. Zn(2+)-binding residues include His-108 and His-110. Glu-132 (proton donor/acceptor) is an active-site residue. Zn(2+) is bound at residue His-188.

The protein belongs to the aldolase class II family. MtnB subfamily. Zn(2+) serves as cofactor.

Its subcellular location is the cytoplasm. It catalyses the reaction 5-(methylsulfanyl)-D-ribulose 1-phosphate = 5-methylsulfanyl-2,3-dioxopentyl phosphate + H2O. Its pathway is amino-acid biosynthesis; L-methionine biosynthesis via salvage pathway; L-methionine from S-methyl-5-thio-alpha-D-ribose 1-phosphate: step 2/6. In terms of biological role, catalyzes the dehydration of methylthioribulose-1-phosphate (MTRu-1-P) into 2,3-diketo-5-methylthiopentyl-1-phosphate (DK-MTP-1-P). The protein is Probable methylthioribulose-1-phosphate dehydratase of Anopheles gambiae (African malaria mosquito).